Consider the following 988-residue polypeptide: Centrosomal protein of 120 kDa (988 aa).

The C2 1 domain maps to 1–112 (MVPKSDQLLI…QETKQAPKWY (112 aa)). The disordered stretch occupies residues 354-425 (QNGHEAEHSQ…KPTVKGIGSV (72 aa)). Residues 384 to 394 (SPAPPPPPNQT) show a composition bias toward pro residues. Positions 435 to 569 (TCGASEVVTS…LSSEKTRFLG (135 aa)) constitute a C2 2 domain. The interval 624–644 (GVPAVDQKPSSPPPAPCPSEI) is disordered. Positions 706–929 (AEYSILEGKL…QYQDCKEIAS (224 aa)) form a coiled coil. A phosphoserine mark is found at Ser-934 and Ser-938.

The protein belongs to the CEP120 family. As to quaternary structure, interacts with TACC2, TACC3, CCDC52, TALPID3. As to expression, ubiquitous. Highly expressed in brain, lung and kidney and weakly expressed in heart, liver, small intestine and limb (at protein level). Expressed in brain.

The protein localises to the cytoplasm. The protein resides in the cytoskeleton. Its subcellular location is the microtubule organizing center. It localises to the centrosome. Its function is as follows. Plays a role in the microtubule-dependent coupling of the nucleus and the centrosome. Involved in the processes that regulate centrosome-mediated interkinetic nuclear migration (INM) of neural progenitors and for proper positioning of neurons during brain development. Also implicated in the migration and selfrenewal of neural progenitors. Required for centriole duplication and maturation during mitosis and subsequent ciliogenesis. Required for the recruitment of CEP295 to the proximal end of new-born centrioles at the centriolar microtubule wall during early S phase in a PLK4-dependent manner. The chain is Centrosomal protein of 120 kDa (Cep120) from Mus musculus (Mouse).